Reading from the N-terminus, the 376-residue chain is Chaperone protein DnaJ (376 aa).

The 66-residue stretch at 5-70 folds into the J domain; sequence DYYEILGVSK…QKRAAYDQYG (66 aa). The segment at 131-209 adopts a CR-type zinc-finger fold; sequence GVTKEIRIPT…CHGHGRVERS (79 aa). Residues Cys-144, Cys-147, Cys-161, Cys-164, Cys-183, Cys-186, Cys-197, and Cys-200 each coordinate Zn(2+). CXXCXGXG motif repeat units lie at residues 144–151, 161–168, 183–190, and 197–204; these read CDVCHGSG, CPTCHGSG, CPHCQGRG, and CNKCHGHG.

The protein belongs to the DnaJ family. As to quaternary structure, homodimer. The cofactor is Zn(2+).

It is found in the cytoplasm. Its function is as follows. Participates actively in the response to hyperosmotic and heat shock by preventing the aggregation of stress-denatured proteins and by disaggregating proteins, also in an autonomous, DnaK-independent fashion. Unfolded proteins bind initially to DnaJ; upon interaction with the DnaJ-bound protein, DnaK hydrolyzes its bound ATP, resulting in the formation of a stable complex. GrpE releases ADP from DnaK; ATP binding to DnaK triggers the release of the substrate protein, thus completing the reaction cycle. Several rounds of ATP-dependent interactions between DnaJ, DnaK and GrpE are required for fully efficient folding. Also involved, together with DnaK and GrpE, in the DNA replication of plasmids through activation of initiation proteins. This Escherichia fergusonii (strain ATCC 35469 / DSM 13698 / CCUG 18766 / IAM 14443 / JCM 21226 / LMG 7866 / NBRC 102419 / NCTC 12128 / CDC 0568-73) protein is Chaperone protein DnaJ.